We begin with the raw amino-acid sequence, 208 residues long: Large ribosomal subunit protein uL3 (208 aa).

The segment at 134–159 (SKFHREAGSTGHCTTPGRSFKNTTMP) is disordered. The segment covering 144-158 (GHCTTPGRSFKNTTM) has biased composition (polar residues).

This sequence belongs to the universal ribosomal protein uL3 family. As to quaternary structure, part of the 50S ribosomal subunit. Forms a cluster with proteins L14 and L19.

Its function is as follows. One of the primary rRNA binding proteins, it binds directly near the 3'-end of the 23S rRNA, where it nucleates assembly of the 50S subunit. This is Large ribosomal subunit protein uL3 from Treponema denticola (strain ATCC 35405 / DSM 14222 / CIP 103919 / JCM 8153 / KCTC 15104).